Reading from the N-terminus, the 842-residue chain is Elongation factor 2 (842 aa).

In terms of domain architecture, tr-type G spans 17-253 (TNVRNMSVIA…LWGDSYFNPK (237 aa)). Residues 26–33 (AHVDHGKS), 158–161 (NKVD), and 213–215 (SGL) contribute to the GTP site. Histidine 699 carries the post-translational modification Diphthamide.

The protein belongs to the TRAFAC class translation factor GTPase superfamily. Classic translation factor GTPase family. EF-G/EF-2 subfamily.

It is found in the cytoplasm. The enzyme catalyses GTP + H2O = GDP + phosphate + H(+). Functionally, catalyzes the GTP-dependent ribosomal translocation step during translation elongation. During this step, the ribosome changes from the pre-translocational (PRE) to the post-translocational (POST) state as the newly formed A-site-bound peptidyl-tRNA and P-site-bound deacylated tRNA move to the P and E sites, respectively. Catalyzes the coordinated movement of the two tRNA molecules, the mRNA and conformational changes in the ribosome. This is Elongation factor 2 (EFT1) from Eremothecium gossypii (strain ATCC 10895 / CBS 109.51 / FGSC 9923 / NRRL Y-1056) (Yeast).